The following is a 1428-amino-acid chain: DNA polymerase III PolC-type (1428 aa).

The Exonuclease domain maps to 414–570 (FVVFDVETTG…YDAEATGYLL (157 aa)).

This sequence belongs to the DNA polymerase type-C family. PolC subfamily.

Its subcellular location is the cytoplasm. It catalyses the reaction DNA(n) + a 2'-deoxyribonucleoside 5'-triphosphate = DNA(n+1) + diphosphate. Its function is as follows. Required for replicative DNA synthesis. This DNA polymerase also exhibits 3' to 5' exonuclease activity. The protein is DNA polymerase III PolC-type of Oceanobacillus iheyensis (strain DSM 14371 / CIP 107618 / JCM 11309 / KCTC 3954 / HTE831).